A 275-amino-acid polypeptide reads, in one-letter code: Exosome complex component Rrp42 (275 aa).

It belongs to the RNase PH family. Rrp42 subfamily. As to quaternary structure, component of the archaeal exosome complex. Forms a hexameric ring-like arrangement composed of 3 Rrp41-Rrp42 heterodimers. The hexameric ring associates with a trimer of Rrp4 and/or Csl4 subunits.

The protein localises to the cytoplasm. Its function is as follows. Non-catalytic component of the exosome, which is a complex involved in RNA degradation. Contributes to the structuring of the Rrp41 active site. The chain is Exosome complex component Rrp42 from Sulfurisphaera tokodaii (strain DSM 16993 / JCM 10545 / NBRC 100140 / 7) (Sulfolobus tokodaii).